Consider the following 224-residue polypeptide: 2-C-methyl-D-erythritol 4-phosphate cytidylyltransferase (224 aa).

Belongs to the IspD/TarI cytidylyltransferase family. IspD subfamily.

The catalysed reaction is 2-C-methyl-D-erythritol 4-phosphate + CTP + H(+) = 4-CDP-2-C-methyl-D-erythritol + diphosphate. It participates in isoprenoid biosynthesis; isopentenyl diphosphate biosynthesis via DXP pathway; isopentenyl diphosphate from 1-deoxy-D-xylulose 5-phosphate: step 2/6. In terms of biological role, catalyzes the formation of 4-diphosphocytidyl-2-C-methyl-D-erythritol from CTP and 2-C-methyl-D-erythritol 4-phosphate (MEP). The protein is 2-C-methyl-D-erythritol 4-phosphate cytidylyltransferase of Saccharopolyspora erythraea (strain ATCC 11635 / DSM 40517 / JCM 4748 / NBRC 13426 / NCIMB 8594 / NRRL 2338).